We begin with the raw amino-acid sequence, 553 residues long: Glutamine--tRNA ligase (553 aa).

The short motif at 34-44 (PEPNGYLHIGH) is the 'HIGH' region element. Residues 35-37 (EPN) and 41-47 (HIGHAKS) each bind ATP. L-glutamine contacts are provided by Asp67 and Tyr212. Residues Thr231, 261-262 (RL), and 269-271 (MSK) each bind ATP. Positions 268–272 (IMSKR) match the 'KMSKS' region motif.

The protein belongs to the class-I aminoacyl-tRNA synthetase family. As to quaternary structure, monomer.

Its subcellular location is the cytoplasm. The enzyme catalyses tRNA(Gln) + L-glutamine + ATP = L-glutaminyl-tRNA(Gln) + AMP + diphosphate. This Tolumonas auensis (strain DSM 9187 / NBRC 110442 / TA 4) protein is Glutamine--tRNA ligase.